Consider the following 241-residue polypeptide: MLSVIGIGPGSQAMMTMEAIEALQAAEIVVGYKTYTHLVKAFTGDKQVIKTGMCREIERCQAAIELAQAGHNVALISSGDAGIYGMAGLVLELVSKQKLDVEVRLIPGMTASIAAASLLGAPLMHDFCHISLSDLLTPWPVIEKRIVAAGEADFVICFYNPRSRGREGHLARAFDLLAASKSAQTPVGVVKSAGRKKEEKWLTTLGDMDFEPVDMTSLVIVGNKTTYVQDGLMITPRGYTL.

The protein belongs to the precorrin methyltransferase family.

The enzyme catalyses Co(II)-factor III + S-adenosyl-L-methionine + H(+) = Co(II)-factor IV + S-adenosyl-L-homocysteine. It functions in the pathway cofactor biosynthesis; adenosylcobalamin biosynthesis; cob(II)yrinate a,c-diamide from sirohydrochlorin (anaerobic route): step 3/10. In terms of biological role, methyltransferase that likely catalyzes the ring contraction and methylation of C-17 in cobalt-factor III to form cobalt-factor IV. May also convert cobalt-precorrin-3 to cobalt-precorrin-4. This Salmonella typhimurium (strain LT2 / SGSC1412 / ATCC 700720) protein is Probable cobalt-factor III C(17)-methyltransferase (cbiH).